We begin with the raw amino-acid sequence, 102 residues long: MANKKIRIRLKAYEHRTLDTAAEKIVETATRTGASVAGPVPLPTERSLYTVIRATHKYKDSREQFEMRTHKRLIDIVNPTQKTVDALMKLDLPSGVNVEIKL.

The protein belongs to the universal ribosomal protein uS10 family. In terms of assembly, part of the 30S ribosomal subunit.

Involved in the binding of tRNA to the ribosomes. This Streptococcus mutans serotype c (strain ATCC 700610 / UA159) protein is Small ribosomal subunit protein uS10.